We begin with the raw amino-acid sequence, 226 residues long: 7-cyano-7-deazaguanine synthase (226 aa).

9-19 contributes to the ATP binding site; that stretch reads LSGGLDSTVAT. Cys192, Cys200, Cys203, and Cys206 together coordinate Zn(2+).

The protein belongs to the QueC family. Requires Zn(2+) as cofactor.

The catalysed reaction is 7-carboxy-7-deazaguanine + NH4(+) + ATP = 7-cyano-7-deazaguanine + ADP + phosphate + H2O + H(+). It functions in the pathway purine metabolism; 7-cyano-7-deazaguanine biosynthesis. Its function is as follows. Catalyzes the ATP-dependent conversion of 7-carboxy-7-deazaguanine (CDG) to 7-cyano-7-deazaguanine (preQ(0)). The polypeptide is 7-cyano-7-deazaguanine synthase (Methanosphaera stadtmanae (strain ATCC 43021 / DSM 3091 / JCM 11832 / MCB-3)).